The chain runs to 98 residues: Class II hydrophobin 2 (98 aa).

The first 21 residues, 1–21 (MFFSRISTIVSMTALFASALA), serve as a signal peptide directing secretion. Cystine bridges form between C34–C80, C41–C71, C42–C54, and C81–C92.

This sequence belongs to the cerato-ulmin hydrophobin family.

It is found in the secreted. Its subcellular location is the cell wall. Functionally, aerial growth, conidiation, and dispersal of filamentous fungi in the environment rely upon a capability of their secreting small amphipathic proteins called hydrophobins (HPBs) with low sequence identity. Class I can self-assemble into an outermost layer of rodlet bundles on aerial cell surfaces, conferring cellular hydrophobicity that supports fungal growth, development and dispersal; whereas Class II form highly ordered films at water-air interfaces through intermolecular interactions but contribute nothing to the rodlet structure. In Botryotinia fuckeliana, hydrophobins are not involved in conferring surface hydrophobicity to conidia and aerial hyphae and their function in sclerotia and fruiting bodies remains to be investigated. The chain is Class II hydrophobin 2 from Botryotinia fuckeliana (strain B05.10) (Noble rot fungus).